We begin with the raw amino-acid sequence, 476 residues long: Aspartyl/glutamyl-tRNA(Asn/Gln) amidotransferase subunit B (476 aa).

This sequence belongs to the GatB/GatE family. GatB subfamily. In terms of assembly, heterotrimer of A, B and C subunits.

It catalyses the reaction L-glutamyl-tRNA(Gln) + L-glutamine + ATP + H2O = L-glutaminyl-tRNA(Gln) + L-glutamate + ADP + phosphate + H(+). The enzyme catalyses L-aspartyl-tRNA(Asn) + L-glutamine + ATP + H2O = L-asparaginyl-tRNA(Asn) + L-glutamate + ADP + phosphate + 2 H(+). Allows the formation of correctly charged Asn-tRNA(Asn) or Gln-tRNA(Gln) through the transamidation of misacylated Asp-tRNA(Asn) or Glu-tRNA(Gln) in organisms which lack either or both of asparaginyl-tRNA or glutaminyl-tRNA synthetases. The reaction takes place in the presence of glutamine and ATP through an activated phospho-Asp-tRNA(Asn) or phospho-Glu-tRNA(Gln). The protein is Aspartyl/glutamyl-tRNA(Asn/Gln) amidotransferase subunit B of Lactobacillus acidophilus (strain ATCC 700396 / NCK56 / N2 / NCFM).